The sequence spans 459 residues: ATP-dependent protease ATPase subunit HslU (459 aa).

Residues V18, 60 to 65 (GVGKTE), D272, E337, and R409 each bind ATP.

The protein belongs to the ClpX chaperone family. HslU subfamily. As to quaternary structure, a double ring-shaped homohexamer of HslV is capped on each side by a ring-shaped HslU homohexamer. The assembly of the HslU/HslV complex is dependent on binding of ATP.

It is found in the cytoplasm. ATPase subunit of a proteasome-like degradation complex; this subunit has chaperone activity. The binding of ATP and its subsequent hydrolysis by HslU are essential for unfolding of protein substrates subsequently hydrolyzed by HslV. HslU recognizes the N-terminal part of its protein substrates and unfolds these before they are guided to HslV for hydrolysis. The polypeptide is ATP-dependent protease ATPase subunit HslU (Thermoanaerobacter sp. (strain X514)).